The following is a 597-amino-acid chain: FERM domain-containing protein 3 (597 aa).

The region spanning 32–312 is the FERM domain; it reads MRCTIRLLDD…ENQAFYKYAK (281 aa). The disordered stretch occupies residues 383–403; it reads LLPSPSEQEEELPLGEGVPLP. The chain crosses the membrane as a helical span at residues 531-551; sequence LLVVGLGLLLFVFPLLLLLLE.

As to expression, ovary-specific.

The protein resides in the membrane. Putative tumor suppressor gene that may be implicated in the origin and progression of lung cancer. The polypeptide is FERM domain-containing protein 3 (FRMD3) (Homo sapiens (Human)).